A 433-amino-acid chain; its full sequence is GPI mannosyltransferase 2 (433 aa).

Met-1 is a topological domain (cytoplasmic). A helical membrane pass occupies residues 2-22 (IVGLTLYFVLFRSIQYLLVFL). The Lumenal segment spans residues 23-109 (TPIRQFDTST…NNDSIYHALR (87 aa)). N-linked (GlcNAc...) asparagine glycans are attached at residues Asn-69 and Asn-101. Residues 110–130 (VGVAIENVLFYLSGIVLYFLT) traverse the membrane as a helical segment. The Cytoplasmic segment spans residues 131-161 (KKIFSQNIRQSQFARTIAKKTSLLFFLTSAA). The chain crosses the membrane as a helical span at residues 162–182 (GFLTSIYSEPLSFFFAFVGIW). The Lumenal segment spans residues 183–215 (SRECSISVPVLGQFDISWRYWFPYSFISMACFT). A helical membrane pass occupies residues 216 to 236 (LASLNRSNCVLLGIYFIFDLI). Topologically, residues 237 to 243 (ELTKNRK) are cytoplasmic. A helical transmembrane segment spans residues 244–264 (FVKAICFPLLSGSLMFSALLY). Residues 265–318 (QQYYLPYKTFCPQRGEWCKSQLFSSIFITKTSLYSYIQSHYWGVGLLKYWTPNN) lie on the Lumenal side of the membrane. A helical membrane pass occupies residues 319 to 339 (IPNFLFAVPNIIILIYSSIYF). Over 340–350 (SKIYPSYNLKA) the chain is Cytoplasmic. The chain crosses the membrane as a helical span at residues 351–371 (LVWITRALVVIVCFFAHVQIL). Topologically, residues 372 to 409 (NRIASFLPLHLWYLADRLVKTSDPKKMENPKGDDKIVK) are lumenal. The chain crosses the membrane as a helical span at residues 410 to 430 (FYIYWLAFWIPLQTILFAAFL). Over 431 to 433 (PPA) the chain is Cytoplasmic.

The protein belongs to the PIGV family. Part of the GPI mannosyltransferase 2 complex composed of GPI18 and PGA1.

It localises to the endoplasmic reticulum membrane. It participates in glycolipid biosynthesis; glycosylphosphatidylinositol-anchor biosynthesis. In terms of biological role, mannosyltransferase involved in glycosylphosphatidylinositol-anchor biosynthesis. Responsible for the transfer of the second mannose to the glycosylphosphatidylinositol during GPI precursor assembly. In Saccharomyces cerevisiae (strain ATCC 204508 / S288c) (Baker's yeast), this protein is GPI mannosyltransferase 2 (GPI18).